Here is a 484-residue protein sequence, read N- to C-terminus: tRNA sulfurtransferase (484 aa).

The region spanning 63 to 167 (REMIERLTCT…LDRLFVIHRQ (105 aa)) is the THUMP domain. ATP-binding positions include 185–186 (LM), lysine 267, glycine 289, and glutamine 298. Residues cysteine 346 and cysteine 457 are joined by a disulfide bond. The Rhodanese domain maps to 405–483 (VLPGQIVIDI…GHTNVRVYRP (79 aa)). Cysteine 457 (cysteine persulfide intermediate) is an active-site residue.

It belongs to the ThiI family.

The protein localises to the cytoplasm. The enzyme catalyses [ThiI sulfur-carrier protein]-S-sulfanyl-L-cysteine + a uridine in tRNA + 2 reduced [2Fe-2S]-[ferredoxin] + ATP + H(+) = [ThiI sulfur-carrier protein]-L-cysteine + a 4-thiouridine in tRNA + 2 oxidized [2Fe-2S]-[ferredoxin] + AMP + diphosphate. It catalyses the reaction [ThiS sulfur-carrier protein]-C-terminal Gly-Gly-AMP + S-sulfanyl-L-cysteinyl-[cysteine desulfurase] + AH2 = [ThiS sulfur-carrier protein]-C-terminal-Gly-aminoethanethioate + L-cysteinyl-[cysteine desulfurase] + A + AMP + 2 H(+). Its pathway is cofactor biosynthesis; thiamine diphosphate biosynthesis. Its function is as follows. Catalyzes the ATP-dependent transfer of a sulfur to tRNA to produce 4-thiouridine in position 8 of tRNAs, which functions as a near-UV photosensor. Also catalyzes the transfer of sulfur to the sulfur carrier protein ThiS, forming ThiS-thiocarboxylate. This is a step in the synthesis of thiazole, in the thiamine biosynthesis pathway. The sulfur is donated as persulfide by IscS. This is tRNA sulfurtransferase from Pseudomonas paraeruginosa (strain DSM 24068 / PA7) (Pseudomonas aeruginosa (strain PA7)).